The primary structure comprises 343 residues: Phosphate acyltransferase (343 aa).

The protein belongs to the PlsX family. Homodimer. Probably interacts with PlsY.

Its subcellular location is the cytoplasm. It catalyses the reaction a fatty acyl-[ACP] + phosphate = an acyl phosphate + holo-[ACP]. It participates in lipid metabolism; phospholipid metabolism. Functionally, catalyzes the reversible formation of acyl-phosphate (acyl-PO(4)) from acyl-[acyl-carrier-protein] (acyl-ACP). This enzyme utilizes acyl-ACP as fatty acyl donor, but not acyl-CoA. This Coxiella burnetii (strain Dugway 5J108-111) protein is Phosphate acyltransferase.